Here is a 656-residue protein sequence, read N- to C-terminus: MAIFARRIGLNQHSAYGSRQRVIVMKNFGKKALIKQQSPKRVAWTGALAASLIMLPTMFGGNPVLAQKAERESLSYGELIQKVNQEQVKRVELDETEQIAKVYLKGQKPDAPPIQVRLLEQNNELINRLKEKNVDFGEISSANSRAAVGLLINLMWILPLVALMLLFLRRSTNASSQAMNFGKSRARFQMEAKTGVKFDDVAGIEEAKEELQEVVTFLKQPERFTAVGARIPKGVLLVGPPGTGKTLLAKAIAGEAAVPFFSISGSEFVEMFVGVGASRVRDLFKKAKDNAPCLIFIDEIDAVGRQRGTGIGGGNDEREQTLNQLLTEMDGFEGNTGIIIIAATNRPDVLDSALLRPGRFDRQVIVDAPDLKGRLEILQVHSRNKKVDPSVSLEAIARRTPGFTGADLANLLNEAAILTARRRKEAITILEIDDAVDRVVAGMEGTPLVDSKSKRLIAYHEVGHGLVGTLLKDHDPVQKVTLIPRGQAQGLTWFTPNEEQGLISRSQLKARITSTLAGRAAEEIVFGKPEVTTGAGDDLQKVTSMARQMVTKFGMSELGPLSLENQSGEVFLGRDWMNKSDYSEEIAAKIDSQVREIINTCYQTSKELLQTNRVVMERLVDLLTEQETIEGDLFRKIVSESQNPVVDEQLSMVNSQ.

The Cytoplasmic portion of the chain corresponds to 1–45 (MAIFARRIGLNQHSAYGSRQRVIVMKNFGKKALIKQQSPKRVAWT). A helical membrane pass occupies residues 46-66 (GALAASLIMLPTMFGGNPVLA). Residues 67–147 (QKAERESLSY…EISSANSRAA (81 aa)) lie on the Lumenal side of the membrane. Residues 148–168 (VGLLINLMWILPLVALMLLFL) form a helical membrane-spanning segment. Residues 169–656 (RRSTNASSQA…DEQLSMVNSQ (488 aa)) are Cytoplasmic-facing. Residue 239 to 246 (GPPGTGKT) participates in ATP binding. His460 is a binding site for Zn(2+). Glu461 is a catalytic residue. Positions 464 and 538 each coordinate Zn(2+).

This sequence in the central section; belongs to the AAA ATPase family. In the C-terminal section; belongs to the peptidase M41 family. In terms of assembly, homohexamer. The cofactor is Zn(2+).

Its subcellular location is the cellular thylakoid membrane. Acts as a processive, ATP-dependent zinc metallopeptidase for both cytoplasmic and membrane proteins. Plays a role in the quality control of integral membrane proteins. The protein is ATP-dependent zinc metalloprotease FtsH of Nostoc sp. (strain PCC 7120 / SAG 25.82 / UTEX 2576).